A 149-amino-acid chain; its full sequence is UPF0251 protein Moth_1655 (149 aa).

The interval 129-149 is disordered; that stretch reads AGRGPGRGRCHRHGRFGEGEH.

Belongs to the UPF0251 family.

In Moorella thermoacetica (strain ATCC 39073 / JCM 9320), this protein is UPF0251 protein Moth_1655.